The primary structure comprises 129 residues: Small ribosomal subunit protein uS11 (129 aa).

The protein belongs to the universal ribosomal protein uS11 family. As to quaternary structure, part of the 30S ribosomal subunit. Interacts with proteins S7 and S18. Binds to IF-3.

In terms of biological role, located on the platform of the 30S subunit, it bridges several disparate RNA helices of the 16S rRNA. Forms part of the Shine-Dalgarno cleft in the 70S ribosome. In Lactobacillus delbrueckii subsp. bulgaricus (strain ATCC 11842 / DSM 20081 / BCRC 10696 / JCM 1002 / NBRC 13953 / NCIMB 11778 / NCTC 12712 / WDCM 00102 / Lb 14), this protein is Small ribosomal subunit protein uS11.